The primary structure comprises 52 residues: Ribosome biogenesis protein Nop10 (52 aa).

Belongs to the NOP10 family.

Its function is as follows. Involved in ribosome biogenesis; more specifically in 18S rRNA pseudouridylation and in cleavage of pre-rRNA. This chain is Ribosome biogenesis protein Nop10, found in Methanococcus vannielii (strain ATCC 35089 / DSM 1224 / JCM 13029 / OCM 148 / SB).